The primary structure comprises 118 residues: Fluoride-specific ion channel FluC 1 (118 aa).

4 helical membrane-spanning segments follow: residues 5 to 25 (FLLVGFGASLGAMLRYGISIF), 39 to 59 (FFINITGSFLLGFLVSTALGP), 61 to 81 (WQLFLGTGFMGGYTTFSTFKV), and 98 to 118 (YVGLTYLCGLIAAFIGIMLGV). Positions 71 and 74 each coordinate Na(+).

The protein belongs to the fluoride channel Fluc/FEX (TC 1.A.43) family.

It is found in the cell membrane. It catalyses the reaction fluoride(in) = fluoride(out). Na(+) is not transported, but it plays an essential structural role and its presence is essential for fluoride channel function. Fluoride-specific ion channel. Important for reducing fluoride concentration in the cell, thus reducing its toxicity. The chain is Fluoride-specific ion channel FluC 1 from Listeria innocua serovar 6a (strain ATCC BAA-680 / CLIP 11262).